Reading from the N-terminus, the 59-residue chain is MATIKVKQTKSAIGRLPKHKATLKGLGLRKINHVRELEDTPAVRGMINRVHYMVEIVEE.

This sequence belongs to the universal ribosomal protein uL30 family. Part of the 50S ribosomal subunit.

The sequence is that of Large ribosomal subunit protein uL30 from Alteromonas mediterranea (strain DSM 17117 / CIP 110805 / LMG 28347 / Deep ecotype).